We begin with the raw amino-acid sequence, 230 residues long: Alpha-S1-casein (230 aa).

The signal sequence occupies residues 1-15 (MKLLILTCLVAVALA). Ser-33, Ser-83, Ser-85, Ser-86, Ser-87, and Ser-88 each carry phosphoserine. Residues 60 to 83 (DELKDTRNEPTEDHIMEDTERKES) are compositionally biased toward basic and acidic residues. Disordered regions lie at residues 60 to 103 (DELK…DILK) and 211 to 230 (TPEG…PQWW). The span at 84–96 (GSSSSEEVVSSTT) shows a compositional bias: low complexity.

It belongs to the alpha-casein family. In terms of tissue distribution, mammary gland specific. Secreted in milk.

It localises to the secreted. Functionally, important role in the capacity of milk to transport calcium phosphate. In Camelus dromedarius (Dromedary), this protein is Alpha-S1-casein (CSN1S1).